Here is a 444-residue protein sequence, read N- to C-terminus: MTETERSNESLLEEIENLRVENAKLKNDLCLERSLNNASDLPMSLDEFKRYGRQMIVDETEGLMGQLKLKNASVLVIGAGGLGCPSLPYLAGAGIGKIGIVDNDTVDTSNLHRQVLHDTIKVGMLKSESAKQVLNKLNPHVSVTSYPVRLSNENAFDIFKDYDVILDCTDTPMARYLISDVAVNLGKPVVSASALRTEGQLSIFNFDNVGPCYRCFYPTPPAPTSVSSCQEGGVLGPCVGLVGVAMVVEALKLLLGVYTRENFKPFLLQYSGFPDQTLRKFKMRGRRVDCPACGTGRTVTRESIESGKINYQSFCGSRNYSVLTEDERIDVHKFERDYWNSSKTKPYVLLDVRPSLHYSISHLPNSHNITVNELRDLPADLNNLQSKIPHLSADSEVLVLCRYGNDSQLATRLLKDKFNLKDVKDVKGGFFKYIDEINPSLPKY.

ATP-binding positions include G81, D102, 109 to 113 (SNLHR), K126, and 170 to 171 (DT). Positions 212 and 215 each coordinate Zn(2+). C229 acts as the Glycyl thioester intermediate; for adenylyltransferase activity in catalysis. Residues C290 and C293 each coordinate Zn(2+). One can recognise a Rhodanese domain in the interval 343–442 (KTKPYVLLDV…YIDEINPSLP (100 aa)). C401 serves as the catalytic Cysteine persulfide intermediate; for sulfurtransferase activity.

The protein in the N-terminal section; belongs to the HesA/MoeB/ThiF family. UBA4 subfamily. Zn(2+) serves as cofactor.

It is found in the cytoplasm. The protein localises to the cytosol. Its pathway is tRNA modification; 5-methoxycarbonylmethyl-2-thiouridine-tRNA biosynthesis. Its function is as follows. Plays a central role in 2-thiolation of mcm(5)S(2)U at tRNA wobble positions of cytosolic tRNA(Lys), tRNA(Glu) and tRNA(Gln). Acts by mediating the C-terminal thiocarboxylation of sulfur carrier URM1. Its N-terminus first activates URM1 as acyl-adenylate (-COAMP), then the persulfide sulfur on the catalytic cysteine is transferred to URM1 to form thiocarboxylation (-COSH) of its C-terminus. The reaction probably involves hydrogen sulfide that is generated from the persulfide intermediate and that acts as a nucleophile towards URM1. Subsequently, a transient disulfide bond is formed. Does not use thiosulfate as sulfur donor; NFS1 probably acting as a sulfur donor for thiocarboxylation reactions. Prior mcm(5) tRNA modification by the elongator complex is required for 2-thiolation. May also be involved in protein urmylation. This chain is Adenylyltransferase and sulfurtransferase UBA4, found in Kluyveromyces lactis (strain ATCC 8585 / CBS 2359 / DSM 70799 / NBRC 1267 / NRRL Y-1140 / WM37) (Yeast).